The following is a 396-amino-acid chain: Queuine tRNA-ribosyltransferase catalytic subunit 1 (396 aa).

Asp99 serves as the catalytic Proton acceptor. Queuine-binding positions include Asp99–Phe103, Asp153, Gln196, and Gly223. The RNA binding stretch occupies residues Gly254 to Asp260. The active-site Nucleophile is Asp273. Residues Thr278–Arg282 are RNA binding; important for wobble base 34 recognition. Zn(2+)-binding residues include Cys311, Cys313, Cys316, and His341.

The protein belongs to the queuine tRNA-ribosyltransferase family. As to quaternary structure, heterodimer of a catalytic subunit qtrt1 and an accessory subunit qtrt2. The cofactor is Zn(2+).

Its subcellular location is the cytoplasm. The protein resides in the mitochondrion outer membrane. It catalyses the reaction guanosine(34) in tRNA + queuine = queuosine(34) in tRNA + guanine. Its function is as follows. Catalytic subunit of the queuine tRNA-ribosyltransferase (TGT) that catalyzes the base-exchange of a guanine (G) residue with queuine (Q) at position 34 (anticodon wobble position) in tRNAs with GU(N) anticodons (tRNA-Asp, -Asn, -His and -Tyr), resulting in the hypermodified nucleoside queuosine (7-(((4,5-cis-dihydroxy-2-cyclopenten-1-yl)amino)methyl)-7-deazaguanosine). Catalysis occurs through a double-displacement mechanism. The nucleophile active site attacks the C1' of nucleotide 34 to detach the guanine base from the RNA, forming a covalent enzyme-RNA intermediate. The proton acceptor active site deprotonates the incoming queuine, allowing a nucleophilic attack on the C1' of the ribose to form the product. The chain is Queuine tRNA-ribosyltransferase catalytic subunit 1 from Xenopus laevis (African clawed frog).